The following is a 66-amino-acid chain: Large ribosomal subunit protein uL29 (66 aa).

The protein belongs to the universal ribosomal protein uL29 family.

The sequence is that of Large ribosomal subunit protein uL29 from Bartonella henselae (strain ATCC 49882 / DSM 28221 / CCUG 30454 / Houston 1) (Rochalimaea henselae).